The primary structure comprises 1154 residues: Diacylglycerol kinase eta (1154 aa).

Positions 1–54 are disordered; that stretch reads MAGAGYQHHPPGGAAVGTSAVSPTAAGPGEDSSDSEAEQGGPQKLIRKVSTSGQ. The PH domain maps to 59–152; it reads TSIKEGQLLK…WISSLKSVQS (94 aa). Phorbol-ester/DAG-type zinc fingers lie at residues 169 to 219 and 241 to 292; these read MHNW…TNNC and PHQW…HPVC. The region spanning 322–457 is the DAGKc domain; it reads FCVSPLLVFV…LDRWSIMTYE (136 aa). Disordered regions lie at residues 560–608, 634–678, and 1123–1154; these read QASR…AVKP, DEQT…APEA, and FKME…SPGN. Residues 573 to 586 are compositionally biased toward acidic residues; it reads PEEDAVESSSEESL. The span at 656–667 shows a compositional bias: basic and acidic residues; the sequence is DDSKDNDTKESP. Residues 1131-1154 are compositionally biased toward polar residues; the sequence is QKTSSQPGPGDTESGSYEANSPGN.

The protein belongs to the eukaryotic diacylglycerol kinase family. As to quaternary structure, interacts with RAF1 and BRAF. Phosphorylated. Phosphorylation does not inhibit catalytic activity. As to expression, expressed in a wide variety of tissues. Most abundant in the brain and testis; also found in lung, spleen, and prostate (at protein level).

The protein resides in the cytoplasm. It localises to the cell membrane. It carries out the reaction a 1,2-diacyl-sn-glycerol + ATP = a 1,2-diacyl-sn-glycero-3-phosphate + ADP + H(+). It catalyses the reaction 1,2-di-(9Z-octadecenoyl)-sn-glycerol + ATP = 1,2-di-(9Z-octadecenoyl)-sn-glycero-3-phosphate + ADP + H(+). It functions in the pathway lipid metabolism; glycerolipid metabolism. Its function is as follows. Diacylglycerol kinase that converts diacylglycerol/DAG into phosphatidic acid/phosphatidate/PA and regulates the respective levels of these two bioactive lipids. Thereby, acts as a central switch between the signaling pathways activated by these second messengers with different cellular targets and opposite effects in numerous biological processes. Plays a key role in promoting cell growth. Activates the Ras/B-Raf/C-Raf/MEK/ERK signaling pathway induced by EGF. Regulates the recruitment of RAF1 and BRAF from cytoplasm to membranes and their heterodimerization. The sequence is that of Diacylglycerol kinase eta (DGKH) from Mesocricetus auratus (Golden hamster).